The following is a 515-amino-acid chain: Kelch repeat protein M-T8 (515 aa).

In terms of domain architecture, BTB spans 16–82; sequence CDVEIVAEGK…MYTESIELHK (67 aa). 5 Kelch repeats span residues 280–326, 328–374, 376–423, 424–471, and 473–512; these read VLYF…AIGG, IYII…CYKN, IWVL…VYKE, RLYC…VYND, and LYVF…YATY.

It belongs to the poxviruses Kelch family.

This Oryctolagus cuniculus (Rabbit) protein is Kelch repeat protein M-T8.